A 659-amino-acid chain; its full sequence is tRNA-guanine(15) transglycosylase (659 aa).

Residue Asp84 is the Nucleophile of the active site. The substrate site is built by Asp119 and Ala190. Residues Cys273, Cys275, and Cys278 each contribute to the Zn(2+) site. In terms of domain architecture, PUA spans 583-658; that stretch reads KNRVVVNKDS…QAIKTRKGMK (76 aa).

Belongs to the archaeosine tRNA-ribosyltransferase family. It depends on Zn(2+) as a cofactor.

It carries out the reaction guanosine(15) in tRNA + 7-cyano-7-deazaguanine = 7-cyano-7-carbaguanosine(15) in tRNA + guanine. The protein operates within tRNA modification; archaeosine-tRNA biosynthesis. Functionally, exchanges the guanine residue with 7-cyano-7-deazaguanine (preQ0) at position 15 in the dihydrouridine loop (D-loop) of archaeal tRNAs. This is tRNA-guanine(15) transglycosylase from Methanobrevibacter smithii (strain ATCC 35061 / DSM 861 / OCM 144 / PS).